The primary structure comprises 392 residues: Nicotinate phosphoribosyltransferase (392 aa).

The residue at position 214 (His214) is a Phosphohistidine; by autocatalysis.

It belongs to the NAPRTase family. Transiently phosphorylated on a His residue during the reaction cycle. Phosphorylation strongly increases the affinity for substrates and increases the rate of nicotinate D-ribonucleotide production. Dephosphorylation regenerates the low-affinity form of the enzyme, leading to product release.

It carries out the reaction nicotinate + 5-phospho-alpha-D-ribose 1-diphosphate + ATP + H2O = nicotinate beta-D-ribonucleotide + ADP + phosphate + diphosphate. It functions in the pathway cofactor biosynthesis; NAD(+) biosynthesis; nicotinate D-ribonucleotide from nicotinate: step 1/1. In terms of biological role, catalyzes the synthesis of beta-nicotinate D-ribonucleotide from nicotinate and 5-phospho-D-ribose 1-phosphate at the expense of ATP. This is Nicotinate phosphoribosyltransferase from Xanthomonas euvesicatoria pv. vesicatoria (strain 85-10) (Xanthomonas campestris pv. vesicatoria).